A 201-amino-acid polypeptide reads, in one-letter code: Recombination protein RecR (201 aa).

The C4-type zinc finger occupies 57-74; sequence CRICGNITENSVNPCAIC. The Toprim domain maps to 82–178; it reads STVFVVENSR…KVTRLAHGLA (97 aa).

It belongs to the RecR family.

In terms of biological role, may play a role in DNA repair. It seems to be involved in an RecBC-independent recombinational process of DNA repair. It may act with RecF and RecO. This is Recombination protein RecR from Leuconostoc citreum (strain KM20).